Reading from the N-terminus, the 396-residue chain is Carbamoyl phosphate synthase small chain (396 aa).

The segment at 1–204 (MTQHDNDPAW…WDKGFGQQDK (204 aa)) is CPSase. The L-glutamine site is built by Ser59, Gly256, and Gly258. The region spanning 208-396 (NVVAIDYGIK…AELMRQKKSA (189 aa)) is the Glutamine amidotransferase type-1 domain. Cys285 acts as the Nucleophile in catalysis. L-glutamine-binding residues include Leu286, Gln289, Asn327, Gly329, and Phe330. Residues His369 and Glu371 contribute to the active site.

The protein belongs to the CarA family. As to quaternary structure, composed of two chains; the small (or glutamine) chain promotes the hydrolysis of glutamine to ammonia, which is used by the large (or ammonia) chain to synthesize carbamoyl phosphate. Tetramer of heterodimers (alpha,beta)4.

The catalysed reaction is hydrogencarbonate + L-glutamine + 2 ATP + H2O = carbamoyl phosphate + L-glutamate + 2 ADP + phosphate + 2 H(+). The enzyme catalyses L-glutamine + H2O = L-glutamate + NH4(+). It functions in the pathway amino-acid biosynthesis; L-arginine biosynthesis; carbamoyl phosphate from bicarbonate: step 1/1. Its pathway is pyrimidine metabolism; UMP biosynthesis via de novo pathway; (S)-dihydroorotate from bicarbonate: step 1/3. In terms of biological role, small subunit of the glutamine-dependent carbamoyl phosphate synthetase (CPSase). CPSase catalyzes the formation of carbamoyl phosphate from the ammonia moiety of glutamine, carbonate, and phosphate donated by ATP, constituting the first step of 2 biosynthetic pathways, one leading to arginine and/or urea and the other to pyrimidine nucleotides. The small subunit (glutamine amidotransferase) binds and cleaves glutamine to supply the large subunit with the substrate ammonia. The protein is Carbamoyl phosphate synthase small chain of Bradyrhizobium diazoefficiens (strain JCM 10833 / BCRC 13528 / IAM 13628 / NBRC 14792 / USDA 110).